A 170-amino-acid chain; its full sequence is ATP synthase subunit b (170 aa).

Residues 30 to 50 (FFFVLAIFLVVLAVIGTFVVP) traverse the membrane as a helical segment.

Belongs to the ATPase B chain family. In terms of assembly, F-type ATPases have 2 components, F(1) - the catalytic core - and F(0) - the membrane proton channel. F(1) has five subunits: alpha(3), beta(3), gamma(1), delta(1), epsilon(1). F(0) has three main subunits: a(1), b(2) and c(10-14). The alpha and beta chains form an alternating ring which encloses part of the gamma chain. F(1) is attached to F(0) by a central stalk formed by the gamma and epsilon chains, while a peripheral stalk is formed by the delta and b chains.

It is found in the cell membrane. F(1)F(0) ATP synthase produces ATP from ADP in the presence of a proton or sodium gradient. F-type ATPases consist of two structural domains, F(1) containing the extramembraneous catalytic core and F(0) containing the membrane proton channel, linked together by a central stalk and a peripheral stalk. During catalysis, ATP synthesis in the catalytic domain of F(1) is coupled via a rotary mechanism of the central stalk subunits to proton translocation. Its function is as follows. Component of the F(0) channel, it forms part of the peripheral stalk, linking F(1) to F(0). The sequence is that of ATP synthase subunit b from Mycobacterium marinum (strain ATCC BAA-535 / M).